Reading from the N-terminus, the 156-residue chain is Ribosomal RNA large subunit methyltransferase H (156 aa).

S-adenosyl-L-methionine-binding positions include leucine 73, glycine 104, and 123 to 128 (LSPLTL).

It belongs to the RNA methyltransferase RlmH family. Homodimer.

The protein localises to the cytoplasm. It carries out the reaction pseudouridine(1915) in 23S rRNA + S-adenosyl-L-methionine = N(3)-methylpseudouridine(1915) in 23S rRNA + S-adenosyl-L-homocysteine + H(+). Functionally, specifically methylates the pseudouridine at position 1915 (m3Psi1915) in 23S rRNA. This chain is Ribosomal RNA large subunit methyltransferase H, found in Edwardsiella ictaluri (strain 93-146).